A 413-amino-acid polypeptide reads, in one-letter code: Multifunctional CCA protein (413 aa).

ATP contacts are provided by Gly8 and Arg11. Residues Gly8 and Arg11 each coordinate CTP. Residues Asp21 and Asp23 each contribute to the Mg(2+) site. Residues Arg91, Arg137, and Arg140 each coordinate ATP. The CTP site is built by Arg91, Arg137, and Arg140. One can recognise an HD domain in the interval 228–329 (TGKHTLLSLK…VSLFDKGDFW (102 aa)).

It belongs to the tRNA nucleotidyltransferase/poly(A) polymerase family. Bacterial CCA-adding enzyme type 1 subfamily. As to quaternary structure, monomer. Can also form homodimers and oligomers. The cofactor is Mg(2+). Ni(2+) is required as a cofactor.

The catalysed reaction is a tRNA precursor + 2 CTP + ATP = a tRNA with a 3' CCA end + 3 diphosphate. It carries out the reaction a tRNA with a 3' CCA end + 2 CTP + ATP = a tRNA with a 3' CCACCA end + 3 diphosphate. Functionally, catalyzes the addition and repair of the essential 3'-terminal CCA sequence in tRNAs without using a nucleic acid template. Adds these three nucleotides in the order of C, C, and A to the tRNA nucleotide-73, using CTP and ATP as substrates and producing inorganic pyrophosphate. tRNA 3'-terminal CCA addition is required both for tRNA processing and repair. Also involved in tRNA surveillance by mediating tandem CCA addition to generate a CCACCA at the 3' terminus of unstable tRNAs. While stable tRNAs receive only 3'-terminal CCA, unstable tRNAs are marked with CCACCA and rapidly degraded. The sequence is that of Multifunctional CCA protein from Shewanella denitrificans (strain OS217 / ATCC BAA-1090 / DSM 15013).